We begin with the raw amino-acid sequence, 358 residues long: G-protein coupled receptor 20 (358 aa).

Residues 1-48 (MPSVSPAGPSAGAVPNATAVTTVRTNASGLEVPLFHLFARLDEELHGT) are Extracellular-facing. Residues Asn-16 and Asn-26 are each glycosylated (N-linked (GlcNAc...) asparagine). A helical membrane pass occupies residues 49–69 (FPGLWLALMAVHGAIFLAGLV). The Cytoplasmic segment spans residues 70–86 (LNGLALYVFCCRTRAKT). The helical transmembrane segment at 87-107 (PSVIYTINLVVTDLLVGLSLP) threads the bilayer. Residues 108–125 (TRFAVYYGARGCLRCAFP) lie on the Extracellular side of the membrane. A helical membrane pass occupies residues 126 to 146 (HVLGYFLNMHCSILFLTCICV). The Cytoplasmic segment spans residues 147–168 (DRYLAIVRPEGSRRCRQPACAR). Residues 169–189 (AVCAFVWLAAGAVTLSVLGVT) form a helical membrane-spanning segment. The Extracellular segment spans residues 190–196 (GSRPCCR). Residues 197–217 (VFALTVLEFLLPLLVISVFTG) traverse the membrane as a helical segment. The Cytoplasmic portion of the chain corresponds to 218–238 (RIMCALSRPGLLHQGRQRRVR). A helical transmembrane segment spans residues 239-259 (AMQLLLTVLIIFLVCFTPFHA). At 260–275 (RQVAVALWPDMPHHTS) the chain is on the extracellular side. The chain crosses the membrane as a helical span at residues 276-296 (LVVYHVAVTLSSLNSCMDPIV). Residues 297 to 358 (YCFVTSGFQA…TQALANGPEA (62 aa)) are Cytoplasmic-facing. The tract at residues 315–339 (HGEREPSSGDVVSMHRSSKGSGRHH) is disordered. Basic residues predominate over residues 330–339 (RSSKGSGRHH).

This sequence belongs to the G-protein coupled receptor 1 family. Ubiquitous with highest levels in intestinal tissues. In the brain detected in thalamus, putamen, and caudate, but not in frontal cortex, pons and hypothalamus.

The protein resides in the cell membrane. In terms of biological role, orphan receptor with constitutive G(i) signaling activity that activate cyclic AMP. This Homo sapiens (Human) protein is G-protein coupled receptor 20 (GPR20).